A 446-amino-acid chain; its full sequence is Histidine--tRNA ligase (446 aa).

Belongs to the class-II aminoacyl-tRNA synthetase family. In terms of assembly, homodimer.

Its subcellular location is the cytoplasm. The catalysed reaction is tRNA(His) + L-histidine + ATP = L-histidyl-tRNA(His) + AMP + diphosphate + H(+). The chain is Histidine--tRNA ligase from Paraburkholderia phymatum (strain DSM 17167 / CIP 108236 / LMG 21445 / STM815) (Burkholderia phymatum).